We begin with the raw amino-acid sequence, 475 residues long: Sulfate adenylyltransferase subunit 1 (475 aa).

Residues 25 to 239 (KSLLRFLTCG…EVLETVEIQR (215 aa)) enclose the tr-type G domain. The tract at residues 34–41 (GSVDDGKS) is G1. 34–41 (GSVDDGKS) contacts GTP. The tract at residues 92-96 (GITID) is G2. The interval 113–116 (DTPG) is G3. Residues 113–117 (DTPGH) and 168–171 (NKMD) contribute to the GTP site. Residues 168–171 (NKMD) are G4. Residues 206–208 (SAL) are G5.

The protein belongs to the TRAFAC class translation factor GTPase superfamily. Classic translation factor GTPase family. CysN/NodQ subfamily. As to quaternary structure, heterodimer composed of CysD, the smaller subunit, and CysN.

It catalyses the reaction sulfate + ATP + H(+) = adenosine 5'-phosphosulfate + diphosphate. Its pathway is sulfur metabolism; hydrogen sulfide biosynthesis; sulfite from sulfate: step 1/3. With CysD forms the ATP sulfurylase (ATPS) that catalyzes the adenylation of sulfate producing adenosine 5'-phosphosulfate (APS) and diphosphate, the first enzymatic step in sulfur assimilation pathway. APS synthesis involves the formation of a high-energy phosphoric-sulfuric acid anhydride bond driven by GTP hydrolysis by CysN coupled to ATP hydrolysis by CysD. The chain is Sulfate adenylyltransferase subunit 1 from Shigella flexneri serotype 5b (strain 8401).